The sequence spans 289 residues: Pyridoxal kinase PdxY (289 aa).

Residues S9 and 44–45 (TQ) contribute to the substrate site. Residues D112, V144, E149, and K182 each coordinate ATP. Substrate is bound at residue D221.

It belongs to the pyridoxine kinase family. PdxY subfamily. As to quaternary structure, homodimer. Mg(2+) is required as a cofactor.

It catalyses the reaction pyridoxal + ATP = pyridoxal 5'-phosphate + ADP + H(+). It participates in cofactor metabolism; pyridoxal 5'-phosphate salvage; pyridoxal 5'-phosphate from pyridoxal: step 1/1. Its function is as follows. Pyridoxal kinase involved in the salvage pathway of pyridoxal 5'-phosphate (PLP). Catalyzes the phosphorylation of pyridoxal to PLP. The chain is Pyridoxal kinase PdxY from Vibrio campbellii (strain ATCC BAA-1116).